A 331-amino-acid chain; its full sequence is UDP-GalNAc:beta-1,3-N-acetylgalactosaminyltransferase 1 (331 aa).

Residues 1–20 (MAPAVLTALPNRMSLRSLKW) lie on the Cytoplasmic side of the membrane. A helical; Signal-anchor for type II membrane protein transmembrane segment spans residues 21–43 (SLLLLSLLSFLVIWYLSLPHYNV). The Lumenal portion of the chain corresponds to 44 to 331 (IERVNWMYFY…VMLRNTTCHY (288 aa)). Asparagine 72, asparagine 154, asparagine 198, asparagine 212, and asparagine 326 each carry an N-linked (GlcNAc...) asparagine glycan.

The protein belongs to the glycosyltransferase 31 family. The cofactor is Mg(2+). In terms of tissue distribution, detected in brain, ovary, kidney, uterus and stomach. In ovary, specifically expressed in follicular granulosa cells and shows particularly strong expression at later stages of follicle development.

Its subcellular location is the golgi apparatus membrane. The enzyme catalyses a globoside Gb3Cer (d18:1(4E)) + UDP-N-acetyl-alpha-D-galactosamine = a globoside Gb4Cer (d18:1(4E)) + UDP + H(+). Its pathway is protein modification; protein glycosylation. Functionally, transfers N-acetylgalactosamine onto globotriaosylceramide. Plays a critical role in preimplantation stage embryonic development. This is UDP-GalNAc:beta-1,3-N-acetylgalactosaminyltransferase 1 from Mus musculus (Mouse).